The following is a 232-amino-acid chain: Vesicle transport through interaction with t-SNAREs homolog 1B (232 aa).

At Ala2 the chain carries N-acetylalanine. Interaction with CLINT1 regions lie at residues 2-23 (ATSA…GLLE) and 69-73 (APLTF). The Cytoplasmic portion of the chain corresponds to 2–208 (ATSAASSEHF…SRKVITNKLL (207 aa)). Residues 36-98 (AGTEEKKKLV…AKLHREVRST (63 aa)) adopt a coiled-coil conformation. Thr103 carries the post-translational modification Phosphothreonine. At Arg107 the chain carries Omega-N-methylarginine. Ser138 is subject to Phosphoserine. Positions 160 to 201 (GSEIIEELGEQRDQLERTKSRLVNTNENLSKSRKILRSMSRK) form a coiled coil. Residues 209–229 (LSVIIVLELAILVGLVYYKFF) traverse the membrane as a helical; Anchor for type IV membrane protein segment. At 230–232 (RHH) the chain is on the vesicular side.

It belongs to the VTI1 family. As to quaternary structure, forms a SNARE complex with STX7, STX8 and VAMP8 which functions in the homotypic fusion of late endosomes. Component of the SNARE complex composed of STX7, STX8, VAMP7 and VIT1B that is required for heterotypic fusion of late endosomes with lysosomes. May interact with STX17. Interacts with CLINT1.

The protein localises to the early endosome membrane. It localises to the late endosome membrane. It is found in the lysosome membrane. Its subcellular location is the cytoplasmic granule. The protein resides in the recycling endosome membrane. V-SNARE that mediates vesicle transport pathways through interactions with t-SNAREs on the target membrane. These interactions are proposed to mediate aspects of the specificity of vesicle trafficking and to promote fusion of the lipid bilayers. The polypeptide is Vesicle transport through interaction with t-SNAREs homolog 1B (Vti1b) (Rattus norvegicus (Rat)).